The primary structure comprises 236 residues: uncharacterized protein (236 aa).

A signal peptide spans 1-23 (MRRILSILVFAIMLAGCSSNAST). Residues 22 to 62 (STEKQHAGGEKTVKAEPQSTSSQKDSTDDYQPNSQVTDDRT) form a disordered region. Residues 24–35 (EKQHAGGEKTVK) show a composition bias toward basic and acidic residues.

This is an uncharacterized protein from Bacillus subtilis (strain 168).